The following is a 594-amino-acid chain: Proteasome-associated ATPase (594 aa).

Positions 1-12 (MTETSANKPENT) are enriched in polar residues. The segment at 1 to 20 (MTETSANKPENTQAHEGRDY) is disordered. A coiled-coil region spans residues 18–71 (RDYSVLERQFNVLRDKLRNVDRQLAAATQNNTKMTTTLQSAKAEILRLKSALEK). An ATP-binding site is contributed by 282 to 287 (GCGKTL). Residues 593–594 (YL) form a docks into pockets in the proteasome alpha-ring region.

This sequence belongs to the AAA ATPase family. As to quaternary structure, homohexamer. Assembles into a hexameric ring structure that caps the 20S proteasome core. Strongly interacts with the prokaryotic ubiquitin-like protein Pup through a hydrophobic interface; the interacting region of ARC lies in its N-terminal coiled-coil domain. There is one Pup binding site per ARC hexamer ring. Upon ATP-binding, the C-terminus of ARC interacts with the alpha-rings of the proteasome core, possibly by binding to the intersubunit pockets.

It participates in protein degradation; proteasomal Pup-dependent pathway. Functionally, ATPase which is responsible for recognizing, binding, unfolding and translocation of pupylated proteins into the bacterial 20S proteasome core particle. May be essential for opening the gate of the 20S proteasome via an interaction with its C-terminus, thereby allowing substrate entry and access to the site of proteolysis. Thus, the C-termini of the proteasomal ATPase may function like a 'key in a lock' to induce gate opening and therefore regulate proteolysis. The polypeptide is Proteasome-associated ATPase (Renibacterium salmoninarum (strain ATCC 33209 / DSM 20767 / JCM 11484 / NBRC 15589 / NCIMB 2235)).